A 224-amino-acid polypeptide reads, in one-letter code: DNA repair and recombination protein RadB (224 aa).

Belongs to the eukaryotic RecA-like protein family. RadB subfamily.

Involved in DNA repair and in homologous recombination. May regulate the cleavage reactions of the branch-structured DNA. Has a very weak ATPase activity that is not stimulated by DNA. Binds DNA but does not promote DNA strands exchange. The sequence is that of DNA repair and recombination protein RadB from Thermococcus onnurineus (strain NA1).